Consider the following 887-residue polypeptide: Alanine--tRNA ligase (887 aa).

Basic and acidic residues predominate over residues Met-425 to Gln-441. A disordered region spans residues Met-425–Ser-448. Residues His-569, His-573, Cys-672, and His-676 each contribute to the Zn(2+) site.

The protein belongs to the class-II aminoacyl-tRNA synthetase family. It depends on Zn(2+) as a cofactor.

It is found in the cytoplasm. It catalyses the reaction tRNA(Ala) + L-alanine + ATP = L-alanyl-tRNA(Ala) + AMP + diphosphate. Functionally, catalyzes the attachment of alanine to tRNA(Ala) in a two-step reaction: alanine is first activated by ATP to form Ala-AMP and then transferred to the acceptor end of tRNA(Ala). Also edits incorrectly charged Ser-tRNA(Ala) and Gly-tRNA(Ala) via its editing domain. This chain is Alanine--tRNA ligase, found in Chlorobium luteolum (strain DSM 273 / BCRC 81028 / 2530) (Pelodictyon luteolum).